A 213-amino-acid chain; its full sequence is Large ribosomal subunit protein bL25 (213 aa).

A compositionally biased stretch (low complexity) spans 191–207; the sequence is AEPTDAPTAPAAAPGAE. The disordered stretch occupies residues 191–213; sequence AEPTDAPTAPAAAPGAEAPKDKA.

It belongs to the bacterial ribosomal protein bL25 family. CTC subfamily. As to quaternary structure, part of the 50S ribosomal subunit; part of the 5S rRNA/L5/L18/L25 subcomplex. Contacts the 5S rRNA. Binds to the 5S rRNA independently of L5 and L18.

In terms of biological role, this is one of the proteins that binds to the 5S RNA in the ribosome where it forms part of the central protuberance. This chain is Large ribosomal subunit protein bL25, found in Polynucleobacter asymbioticus (strain DSM 18221 / CIP 109841 / QLW-P1DMWA-1) (Polynucleobacter necessarius subsp. asymbioticus).